The following is a 264-amino-acid chain: uncharacterized protein (264 aa).

Residues Leu-3–Pro-243 enclose the ABC transporter domain. Gly-35–Thr-42 is a binding site for ATP.

It belongs to the ABC transporter superfamily.

This is an uncharacterized protein from Bacillus subtilis (strain 168).